A 106-amino-acid polypeptide reads, in one-letter code: Large ribosomal subunit protein uL24 (106 aa).

This sequence belongs to the universal ribosomal protein uL24 family. As to quaternary structure, part of the 50S ribosomal subunit.

Functionally, one of two assembly initiator proteins, it binds directly to the 5'-end of the 23S rRNA, where it nucleates assembly of the 50S subunit. One of the proteins that surrounds the polypeptide exit tunnel on the outside of the subunit. In Acidithiobacillus ferrooxidans (strain ATCC 53993 / BNL-5-31) (Leptospirillum ferrooxidans (ATCC 53993)), this protein is Large ribosomal subunit protein uL24.